The following is a 422-amino-acid chain: UDP-N-acetylglucosamine 1-carboxyvinyltransferase (422 aa).

Residue 22-23 participates in phosphoenolpyruvate binding; the sequence is KN. Arg93 contributes to the UDP-N-acetyl-alpha-D-glucosamine binding site. Cys117 (proton donor) is an active-site residue. 2-(S-cysteinyl)pyruvic acid O-phosphothioketal is present on Cys117. UDP-N-acetyl-alpha-D-glucosamine is bound by residues 122-126, Asp309, and Ile331; that span reads RPVDQ.

It belongs to the EPSP synthase family. MurA subfamily.

It localises to the cytoplasm. The catalysed reaction is phosphoenolpyruvate + UDP-N-acetyl-alpha-D-glucosamine = UDP-N-acetyl-3-O-(1-carboxyvinyl)-alpha-D-glucosamine + phosphate. The protein operates within cell wall biogenesis; peptidoglycan biosynthesis. Functionally, cell wall formation. Adds enolpyruvyl to UDP-N-acetylglucosamine. The chain is UDP-N-acetylglucosamine 1-carboxyvinyltransferase from Delftia acidovorans (strain DSM 14801 / SPH-1).